The sequence spans 455 residues: Maintenance of telomere capping protein 1 (455 aa).

Disordered regions lie at residues 1–113 (MAET…SATP) and 296–317 (AKKM…EDAS). The segment covering 27–38 (PTSKEFNNDDSK) has biased composition (basic and acidic residues). Positions 80 to 113 (VAATSNERQQHDASNQPSQAAQTTINKNTESATP) are enriched in polar residues. The segment covering 296–305 (AKKMNKENKQ) has biased composition (basic and acidic residues).

The protein belongs to the MTC1 family.

The protein localises to the cytoplasm. Involved in telomere capping. In Schizosaccharomyces pombe (strain 972 / ATCC 24843) (Fission yeast), this protein is Maintenance of telomere capping protein 1.